We begin with the raw amino-acid sequence, 166 residues long: Testis-expressed protein 51 (166 aa).

The N-terminal stretch at 1-15 (MLPLLIICLLPAIEG) is a signal peptide. A helical membrane pass occupies residues 138–154 (SLWAVSLSSALLLAIAG).

It localises to the membrane. The polypeptide is Testis-expressed protein 51 (Homo sapiens (Human)).